We begin with the raw amino-acid sequence, 342 residues long: MAERKLLEALNGRTVFPPPIWLMRQAGRYLPEYRETRKKAGSFLDLCYNPELAVEVTLQPIRRFGFDAAILFSDILVIPHALGRDLRFEEGAGPLMSPIQANEIPGLDPNLIHNRLQPVYETVRRLRSELSEETALIGFCGAPWTVATYMIAGRGTPDQAPARLFGYRHPKEFSELLDTISAASADYLIRQIDEGADAVQIFDSWAGILDETSFDQWCLRPVAEIVRRVRERHPNVPIIGFPKGAGWLYSRYRQQTGVTALGLDWTVPLSEASRLQAEGPVQGNLDPMRLVAGGQALSKGVEDILSALGGAPFIFNLGHGITPETPIGHVEAMIQQVREGRL.

Substrate-binding positions include 24–28 (RQAGR), aspartate 74, tyrosine 149, serine 204, and histidine 319.

The protein belongs to the uroporphyrinogen decarboxylase family. As to quaternary structure, homodimer.

It is found in the cytoplasm. The enzyme catalyses uroporphyrinogen III + 4 H(+) = coproporphyrinogen III + 4 CO2. It participates in porphyrin-containing compound metabolism; protoporphyrin-IX biosynthesis; coproporphyrinogen-III from 5-aminolevulinate: step 4/4. Functionally, catalyzes the decarboxylation of four acetate groups of uroporphyrinogen-III to yield coproporphyrinogen-III. The protein is Uroporphyrinogen decarboxylase of Chelativorans sp. (strain BNC1).